The sequence spans 454 residues: tRNA modification GTPase MnmE (454 aa).

The (6S)-5-formyl-5,6,7,8-tetrahydrofolate site is built by arginine 23, glutamate 80, and lysine 120. Positions 216 to 377 (GMKVVIAGRP…LRSHLKEAMG (162 aa)) constitute a TrmE-type G domain. Position 226 (asparagine 226) interacts with K(+). Residues 226–231 (NAGKSS), 245–251 (TDIAGTT), 270–273 (DTAG), and 358–360 (SAR) contribute to the GTP site. Residue serine 230 coordinates Mg(2+). Residues threonine 245, isoleucine 247, and threonine 250 each coordinate K(+). Threonine 251 is a binding site for Mg(2+). Residue lysine 454 coordinates (6S)-5-formyl-5,6,7,8-tetrahydrofolate.

This sequence belongs to the TRAFAC class TrmE-Era-EngA-EngB-Septin-like GTPase superfamily. TrmE GTPase family. In terms of assembly, homodimer. Heterotetramer of two MnmE and two MnmG subunits. K(+) is required as a cofactor.

It is found in the cytoplasm. In terms of biological role, exhibits a very high intrinsic GTPase hydrolysis rate. Involved in the addition of a carboxymethylaminomethyl (cmnm) group at the wobble position (U34) of certain tRNAs, forming tRNA-cmnm(5)s(2)U34. This is tRNA modification GTPase MnmE from Proteus mirabilis (strain HI4320).